Reading from the N-terminus, the 238-residue chain is MEEAKIPMLELGPITFNLTLLAVCIVTIAVIFAFVFWASRQMKLKPEGKQTALEYLISFVDGIGEEHLDHNLQKSYSLLLFTIFLFVAVANNLGLFTKLETVNGYNLWTSPTANLAFDLALSLFITLMVHIEGVRRRGLVAHLKRLATPWPMTPMNLLEEFTNFLSLAIRLFGNIFAGEVVTGLIVQLANYRVYWWPIAFLVNMAWTAFSVFISCIQAFVFTKLTATYLGKKVNESEE.

A run of 5 helical transmembrane segments spans residues Leu18–Ala38, Tyr76–Phe96, Asn114–Val134, Ser166–Val186, and Val193–Ile213.

It belongs to the ATPase A chain family. As to quaternary structure, F-type ATPases have 2 components, CF(1) - the catalytic core - and CF(0) - the membrane proton channel. CF(1) has five subunits: alpha(3), beta(3), gamma(1), delta(1), epsilon(1). CF(0) has three main subunits: a(1), b(2) and c(9-12). The alpha and beta chains form an alternating ring which encloses part of the gamma chain. CF(1) is attached to CF(0) by a central stalk formed by the gamma and epsilon chains, while a peripheral stalk is formed by the delta and b chains.

Its subcellular location is the cell membrane. Functionally, key component of the proton channel; it plays a direct role in the translocation of protons across the membrane. The protein is ATP synthase subunit a of Streptococcus pyogenes serotype M5 (strain Manfredo).